The primary structure comprises 330 residues: Ribosomal RNA small subunit methyltransferase C (330 aa).

This sequence belongs to the methyltransferase superfamily. RsmC family. As to quaternary structure, monomer.

The protein resides in the cytoplasm. It carries out the reaction guanosine(1207) in 16S rRNA + S-adenosyl-L-methionine = N(2)-methylguanosine(1207) in 16S rRNA + S-adenosyl-L-homocysteine + H(+). In terms of biological role, specifically methylates the guanine in position 1207 of 16S rRNA in the 30S particle. The chain is Ribosomal RNA small subunit methyltransferase C from Haemophilus influenzae (strain PittGG).